A 510-amino-acid polypeptide reads, in one-letter code: Ribonuclease Y (510 aa).

The helical transmembrane segment at 1 to 21 (MLIYILSGLGVLVGALLGYVV) threads the bilayer. In terms of domain architecture, KH spans 200 to 260 (TVSTIMLPND…LRREIAKRTI (61 aa)). The HD domain occupies 326–419 (VLNHSIEVAL…VAAADALSAA (94 aa)).

The protein belongs to the RNase Y family.

The protein localises to the cell membrane. Functionally, endoribonuclease that initiates mRNA decay. This Thermosipho melanesiensis (strain DSM 12029 / CIP 104789 / BI429) protein is Ribonuclease Y.